A 349-amino-acid polypeptide reads, in one-letter code: Terpene cyclase rstn5 (349 aa).

The next 5 helical transmembrane spans lie at 4–24, 81–101, 116–136, 158–178, and 181–201; these read LTPL…WGVF, FMVQ…TEGA, GLFS…FWFV, VVPS…FDPF, and GLDL…CISL. Asn222 carries an N-linked (GlcNAc...) asparagine glycan. The next 3 membrane-spanning stretches (helical) occupy residues 228-248, 271-291, and 309-329; these read VAVG…GLTG, LVLL…LLLA, and TLAV…AWAL.

It belongs to the membrane-bound ascI terpene cyclase family.

The protein localises to the membrane. It participates in antifungal biosynthesis. Functionally, cyclase; part of the gene cluster that mediates the biosynthesis of the tetrahydropyranyl antifungal agent restricticin that acts as an inhibitor of CYP51 and blocks the ergosterol biosynthesis. The highly reducing polyketide synthase rstn3, the short chain dehydrogenase rstn4, the cyclase rstn5, the FAD-dependent monooxygenase rstn6 and the enoylreductase rstn7 are required to generate the first stable intermediate desmethylrestrictinol. Rstn3 with rstn7 biosynthesize the first polyketide chain intermediate that is reduced by rstn4, followed by epoxidation by rstn6 before 6-endo cyclization via epoxide opening by rstn5 leads to desmethylrestrictinol. The methyltransferase rstn1 then catalyzes the C4 O-methylation of desmethylrestrictinol to produce restrictinol, and the nonribosomal peptide synthetase rstn8 catalyzes the C3 esterification of restrictinol with glycine that leads to restricticin. The protein is Terpene cyclase rstn5 of Aspergillus nomiae NRRL (strain ATCC 15546 / NRRL 13137 / CBS 260.88 / M93).